A 753-amino-acid polypeptide reads, in one-letter code: Subtilisin-like protease SBT3.17 (753 aa).

The first 29 residues, 1 to 29 (MGNSFLIADTSSLVIGLLLILNGVFISAA), serve as a signal peptide directing secretion. Residues 30 to 116 (KHYGLNKIHI…VVPSRVMRLK (87 aa)) constitute a propeptide, activation peptide. An Inhibitor I9 domain is found at 38–115 (HIVHLGAKQH…RVVPSRVMRL (78 aa)). An N-linked (GlcNAc...) asparagine glycan is attached at Asn-97. A Peptidase S8 domain is found at 120–603 (TFDYLGLLPT…GGLINPEKVT (484 aa)). The active-site Charge relay system is the Asp-150. Residue Asn-161 is glycosylated (N-linked (GlcNAc...) asparagine). The active-site Charge relay system is the His-227. N-linked (GlcNAc...) asparagine glycosylation is present at Asn-369. The Charge relay system role is filled by Ser-534. 3 N-linked (GlcNAc...) asparagine glycosylation sites follow: Asn-639, Asn-704, and Asn-737.

Belongs to the peptidase S8 family.

The protein localises to the secreted. The polypeptide is Subtilisin-like protease SBT3.17 (Arabidopsis thaliana (Mouse-ear cress)).